Here is a 205-residue protein sequence, read N- to C-terminus: Large ribosomal subunit protein bL25A (205 aa).

This sequence belongs to the bacterial ribosomal protein bL25 family. CTC subfamily. As to quaternary structure, part of the 50S ribosomal subunit; part of the 5S rRNA/L5/L18/L25 subcomplex. Contacts the 5S rRNA. Binds to the 5S rRNA independently of L5 and L18.

This is one of the proteins that binds to the 5S RNA in the ribosome where it forms part of the central protuberance. This chain is Large ribosomal subunit protein bL25A, found in Symbiobacterium thermophilum (strain DSM 24528 / JCM 14929 / IAM 14863 / T).